A 1103-amino-acid polypeptide reads, in one-letter code: Trophozoite exported protein 1 (1103 aa).

Positions 173–212 (KKEKIEDKKYEQDDEEENEEEEEEEEEEEGEEENKEDEEF) form a coiled coil. Disordered stretches follow at residues 178 to 210 (EDKKYEQDDEEENEEEEEEEEEEEGEEENKEDE) and 271 to 301 (KSYSGDEKINTSDNAKSCSGDEKVITSDNGK). Acidic residues predominate over residues 184 to 210 (QDDEEENEEEEEEEEEEEGEEENKEDE). A compositionally biased stretch (basic and acidic residues) spans 271 to 280 (KSYSGDEKIN). Coiled coils occupy residues 304-330 (DYVKNESEEQEEKENMLNNKKRSLECN) and 478-518 (YKNY…KLNN). The segment at 544 to 601 (YFDEGENPYNRNNKNYRTDNKNSDDNNNNNNYYYNNYNSDDNYNSEDNEYNNGNYRFR) is disordered. The segment covering 568–585 (DNNNNNNYYYNNYNSDDN) has biased composition (low complexity). Coiled coils occupy residues 650–791 (FRNL…LSGI), 819–932 (DEKY…IYKK), and 993–1030 (NKKLIGHCQDLEKENSTLQNKLSNEIKNSKMLSKNLSK). The RING-type zinc-finger motif lies at 1050–1089 (CSVCMENFRNYIIIKCGHIYCNNCIFNNLKTRNRKCPQCK).

The protein resides in the host cell membrane. This Plasmodium falciparum (isolate 3D7) protein is Trophozoite exported protein 1.